Consider the following 297-residue polypeptide: Homoserine kinase (297 aa).

82–92 (PLTRGLGSSAS) contacts ATP.

The protein belongs to the GHMP kinase family. Homoserine kinase subfamily.

The protein localises to the cytoplasm. It carries out the reaction L-homoserine + ATP = O-phospho-L-homoserine + ADP + H(+). Its pathway is amino-acid biosynthesis; L-threonine biosynthesis; L-threonine from L-aspartate: step 4/5. In terms of biological role, catalyzes the ATP-dependent phosphorylation of L-homoserine to L-homoserine phosphate. In Bacillus thuringiensis (strain Al Hakam), this protein is Homoserine kinase.